We begin with the raw amino-acid sequence, 410 residues long: Cytochrome P450(BM-1) (410 aa).

Cys356 contributes to the heme binding site.

Belongs to the cytochrome P450 family. Heme serves as cofactor.

It is found in the cytoplasm. Its function is as follows. Cytochromes P450 are a group of heme-thiolate monooxygenases. They oxidize a variety of structurally unrelated compounds, including steroids, fatty acids, and xenobiotics. The protein is Cytochrome P450(BM-1) (cyp106) of Priestia megaterium (strain ATCC 14581 / DSM 32 / CCUG 1817 / JCM 2506 / NBRC 15308 / NCIMB 9376 / NCTC 10342 / NRRL B-14308 / VKM B-512 / Ford 19) (Bacillus megaterium).